Here is an 864-residue protein sequence, read N- to C-terminus: MRWIKVMAGLLPMIGSKGADEKDSSQQRRLSRVVVPEHYDLHVKILDAGFCGSVGIRVMISQDVSEIVLNAKELEIRDAGIVVEGARIPGRVVVGEAEKELEVVRIVFPSSLRAGPGYLTMEFCGDYSNGLVGLYKSGGPKEVYSTHFEPTDARRAFPCFDQPDMKATFKISIDAGSKFTVLANTQAIPSLREEYGDRKIEYFEETCKMSTYLVAFVVGELSYIEDWSKDGVRLRVYGDSSEVEWGRYGLEVGKRCLEYFSEYFGVGYEFPRAGSAKIDMVGIPNFSSGAMENWGLITFRRESLLYVPGKSNVEDMKNVAGTVCHELGHMWFGNLVTMSWWDDLWLNEGFATWVSFKGMENIGSVVSWDVWGEFVLWNVVRGMVDDGLGKSHQIRMNVTDPGEIGEIFDSISYCKGASVIRMIERYVGESVFMLGIRRYIKEHMYGNGNAMSLWKAIGEEYGEDISEMVEGWISQAGYPVVSVQDCGSSLVLSQSRYSMLGKSDDSLWTIPVVVSWEGKGQERIELRGRETTVRKRSSVYKVNAEYGGFYRVLYDSAGLSGLESRIDSLSVVDRVNVIEDVFGLGFGLYGGLEHGLRRISEYYSDSYHVARSGIEKLLRLRSVFYDDAEIVSLIDKKVRKMILPCVGRIDVFDIGTSVESVSMNKYVLSVGVEVGIREAVEKVQELWRRHVEAGEELGELRWIVYKAVVDENLGYMMDKYKNGDTPGMRREVMNGFSGIKREENFLDVVGNLSQFSVEDIGVVIGSISRGGAFRDAMVEYVVSHGEELYLMVHKNAMLYNMIIMSLRHVSGDLIVEKVERFLSGIKHSGSNLSIEKVRNEIQWRRRMRGIREEVLRGLLPEAEK.

Substrate is bound by residues Glu149 and 289–293; that span reads GAMEN. His325 lines the Zn(2+) pocket. Catalysis depends on Glu326, which acts as the Proton acceptor. 2 residues coordinate Zn(2+): His329 and Glu348.

This sequence belongs to the peptidase M1 family. It depends on Zn(2+) as a cofactor.

In Encephalitozoon cuniculi (strain GB-M1) (Microsporidian parasite), this protein is Probable M1 family aminopeptidase 1.